A 173-amino-acid polypeptide reads, in one-letter code: Large ribosomal subunit protein uL10 (173 aa).

This sequence belongs to the universal ribosomal protein uL10 family. As to quaternary structure, part of the ribosomal stalk of the 50S ribosomal subunit. The N-terminus interacts with L11 and the large rRNA to form the base of the stalk. The C-terminus forms an elongated spine to which L12 dimers bind in a sequential fashion forming a multimeric L10(L12)X complex.

In terms of biological role, forms part of the ribosomal stalk, playing a central role in the interaction of the ribosome with GTP-bound translation factors. In Beutenbergia cavernae (strain ATCC BAA-8 / DSM 12333 / CCUG 43141 / JCM 11478 / NBRC 16432 / NCIMB 13614 / HKI 0122), this protein is Large ribosomal subunit protein uL10.